We begin with the raw amino-acid sequence, 335 residues long: N-acetyl-gamma-glutamyl-phosphate reductase (335 aa).

Residue Cys-156 is part of the active site.

This sequence belongs to the NAGSA dehydrogenase family. Type 1 subfamily.

Its subcellular location is the cytoplasm. It catalyses the reaction N-acetyl-L-glutamate 5-semialdehyde + phosphate + NADP(+) = N-acetyl-L-glutamyl 5-phosphate + NADPH + H(+). The protein operates within amino-acid biosynthesis; L-arginine biosynthesis; N(2)-acetyl-L-ornithine from L-glutamate: step 3/4. Functionally, catalyzes the NADPH-dependent reduction of N-acetyl-5-glutamyl phosphate to yield N-acetyl-L-glutamate 5-semialdehyde. The sequence is that of N-acetyl-gamma-glutamyl-phosphate reductase from Aeromonas salmonicida (strain A449).